Consider the following 566-residue polypeptide: DDB1- and CUL4-associated factor 10 (566 aa).

Disordered regions lie at residues 1 to 72 and 87 to 123; these read MFPF…AERA and TASA…GAGL. 6 positions are modified to phosphoserine: Ser50, Ser57, Ser67, Ser96, Ser99, and Ser100. Positions 87–100 are enriched in low complexity; sequence TASASQAKLSPSSS. Residue Arg141 is modified to Omega-N-methylarginine. WD repeat units follow at residues 173 to 212, 216 to 254, 258 to 297, and 303 to 342; these read RTHG…HIKT, AHED…TKVC, GHTS…EDGC, and FHTR…KSLE. Residues 354–374 show a composition bias toward low complexity; sequence TTSSSDLTTTSSSSGSRVSGS. The disordered stretch occupies residues 354 to 413; the sequence is TTSSSDLTTTSSSSGSRVSGSPCHHNDSNSTEKHMSRASQREGVSPRNSLEVLTPEVPGE. Phosphoserine is present on Ser356. Residues 377–388 are compositionally biased toward basic and acidic residues; the sequence is HHNDSNSTEKHM. WD repeat units lie at residues 415–455, 477–515, and 533–566; these read DRGN…QEGA, VGRG…SELV, and SHND…QPKF.

Belongs to the WD repeat DCAF10 family. As to quaternary structure, interacts with DDB1.

It participates in protein modification; protein ubiquitination. May function as a substrate receptor for CUL4-DDB1 E3 ubiquitin-protein ligase complex. This chain is DDB1- and CUL4-associated factor 10 (Dcaf10), found in Mus musculus (Mouse).